Here is a 257-residue protein sequence, read N- to C-terminus: 3-methyl-2-oxobutanoate hydroxymethyltransferase (257 aa).

Positions 42 and 81 each coordinate Mg(2+). 3-methyl-2-oxobutanoate is bound by residues 42–43, Asp81, and Lys110; that span reads DS. Position 112 (Glu112) interacts with Mg(2+). Glu176 functions as the Proton acceptor in the catalytic mechanism.

Belongs to the PanB family. Homodecamer; pentamer of dimers. Mg(2+) serves as cofactor.

It localises to the cytoplasm. The catalysed reaction is 3-methyl-2-oxobutanoate + (6R)-5,10-methylene-5,6,7,8-tetrahydrofolate + H2O = 2-dehydropantoate + (6S)-5,6,7,8-tetrahydrofolate. The protein operates within cofactor biosynthesis; (R)-pantothenate biosynthesis; (R)-pantoate from 3-methyl-2-oxobutanoate: step 1/2. Catalyzes the reversible reaction in which hydroxymethyl group from 5,10-methylenetetrahydrofolate is transferred onto alpha-ketoisovalerate to form ketopantoate. The chain is 3-methyl-2-oxobutanoate hydroxymethyltransferase from Pelagibacter ubique (strain HTCC1062).